We begin with the raw amino-acid sequence, 154 residues long: Myoglobin (154 aa).

The region spanning 2-148 (GLSEAEWQLV…FRKDIAAKYK (147 aa)) is the Globin domain. S4 bears the Phosphoserine mark. H65 is a nitrite binding site. O2 is bound at residue H65. Position 68 is a phosphothreonine (T68). Residue H94 participates in heme b binding.

Belongs to the globin family. As to quaternary structure, monomeric.

It is found in the cytoplasm. It localises to the sarcoplasm. It catalyses the reaction Fe(III)-heme b-[protein] + nitric oxide + H2O = Fe(II)-heme b-[protein] + nitrite + 2 H(+). The enzyme catalyses H2O2 + AH2 = A + 2 H2O. Monomeric heme protein which primary function is to store oxygen and facilitate its diffusion within muscle tissues. Reversibly binds oxygen through a pentacoordinated heme iron and enables its timely and efficient release as needed during periods of heightened demand. Depending on the oxidative conditions of tissues and cells, and in addition to its ability to bind oxygen, it also has a nitrite reductase activity whereby it regulates the production of bioactive nitric oxide. Under stress conditions, like hypoxia and anoxia, it also protects cells against reactive oxygen species thanks to its pseudoperoxidase activity. This chain is Myoglobin (MB), found in Ziphius cavirostris (Cuvier's beaked whale).